A 150-amino-acid chain; its full sequence is Ribosome maturation factor RimP (150 aa).

This sequence belongs to the RimP family.

The protein localises to the cytoplasm. Its function is as follows. Required for maturation of 30S ribosomal subunits. This is Ribosome maturation factor RimP from Klebsiella pneumoniae (strain 342).